Reading from the N-terminus, the 80-residue chain is NAD(P)H-quinone oxidoreductase subunit O (80 aa).

The protein belongs to the complex I NdhO subunit family. As to quaternary structure, NDH-1 can be composed of about 15 different subunits; different subcomplexes with different compositions have been identified which probably have different functions.

The protein resides in the cellular thylakoid membrane. It catalyses the reaction a plastoquinone + NADH + (n+1) H(+)(in) = a plastoquinol + NAD(+) + n H(+)(out). The enzyme catalyses a plastoquinone + NADPH + (n+1) H(+)(in) = a plastoquinol + NADP(+) + n H(+)(out). In terms of biological role, NDH-1 shuttles electrons from an unknown electron donor, via FMN and iron-sulfur (Fe-S) centers, to quinones in the respiratory and/or the photosynthetic chain. The immediate electron acceptor for the enzyme in this species is believed to be plastoquinone. Couples the redox reaction to proton translocation, and thus conserves the redox energy in a proton gradient. Cyanobacterial NDH-1 also plays a role in inorganic carbon-concentration. This is NAD(P)H-quinone oxidoreductase subunit O from Prochlorococcus marinus subsp. pastoris (strain CCMP1986 / NIES-2087 / MED4).